We begin with the raw amino-acid sequence, 643 residues long: 1-deoxy-D-xylulose-5-phosphate synthase (643 aa).

Residues His78 and 119 to 121 (AHS) each bind thiamine diphosphate. Asp150 is a Mg(2+) binding site. Thiamine diphosphate contacts are provided by residues 151–152 (GS), Asn179, Tyr288, and Glu370. Position 179 (Asn179) interacts with Mg(2+).

The protein belongs to the transketolase family. DXPS subfamily. In terms of assembly, homodimer. The cofactor is Mg(2+). Requires thiamine diphosphate as cofactor.

The catalysed reaction is D-glyceraldehyde 3-phosphate + pyruvate + H(+) = 1-deoxy-D-xylulose 5-phosphate + CO2. Its pathway is metabolic intermediate biosynthesis; 1-deoxy-D-xylulose 5-phosphate biosynthesis; 1-deoxy-D-xylulose 5-phosphate from D-glyceraldehyde 3-phosphate and pyruvate: step 1/1. Catalyzes the acyloin condensation reaction between C atoms 2 and 3 of pyruvate and glyceraldehyde 3-phosphate to yield 1-deoxy-D-xylulose-5-phosphate (DXP). This is 1-deoxy-D-xylulose-5-phosphate synthase from Brucella suis (strain ATCC 23445 / NCTC 10510).